Here is a 283-residue protein sequence, read N- to C-terminus: NAD kinase (283 aa).

D68 serves as the catalytic Proton acceptor. Residues 68–69 (DG), 142–143 (ND), R153, D172, 183–188 (TAYSLS), and Q242 contribute to the NAD(+) site.

It belongs to the NAD kinase family. Requires a divalent metal cation as cofactor.

The protein localises to the cytoplasm. The enzyme catalyses NAD(+) + ATP = ADP + NADP(+) + H(+). Involved in the regulation of the intracellular balance of NAD and NADP, and is a key enzyme in the biosynthesis of NADP. Catalyzes specifically the phosphorylation on 2'-hydroxyl of the adenosine moiety of NAD to yield NADP. This chain is NAD kinase, found in Thermoanaerobacter pseudethanolicus (strain ATCC 33223 / 39E) (Clostridium thermohydrosulfuricum).